The primary structure comprises 371 residues: 43 kDa relaxation protein (371 aa).

5 disordered regions span residues 1 to 46 (MASY…GNMP), 150 to 172 (KEPD…AKNT), 196 to 221 (RVDS…GQVQ), 263 to 291 (SERD…FDFE), and 328 to 371 (IHQE…SFSR). A compositionally biased stretch (basic and acidic residues) spans 22 to 42 (YIAREGKYAREKDSDLEHKES). Basic residues predominate over residues 157–168 (QKRHVSGKHRPN). Over residues 196 to 215 (RVDSRSLKAQGIDREPERHL) the composition is skewed to basic and acidic residues. The span at 330–365 (QEMERQRERERLAEKQRQQEKERQRLAEQIRQKPDK) shows a compositional bias: basic and acidic residues.

It belongs to the MobA/MobL family.

Functionally, this protein is probably required for relaxation complex formation. This is 43 kDa relaxation protein from Salmonella typhimurium.